The primary structure comprises 2167 residues: Papilin (2167 aa).

The first 19 residues, 1–19 (MRLLLFSAALLLCSVPTWA), serve as a signal peptide directing secretion. Residues 76–123 (TGNWGPWVPENECSRSCGGGVQLEKRQCSGDCTGASVRYISCNLNACE) form the TSP type-1 1 domain. 3 disulfide bridges follow: Cys-88–Cys-117, Cys-92–Cys-122, and Cys-103–Cys-107. Asn-268 carries N-linked (GlcNAc...) asparagine glycosylation. TSP type-1 domains lie at 341-402 (VDYM…VDCE), 404-459 (EWFT…TCNR), and 461-525 (ACPE…GPCE). Disulfide bonds link Cys-353-Cys-396, Cys-357-Cys-401, and Cys-368-Cys-382. N-linked (GlcNAc...) asparagine glycans are attached at residues Asn-386 and Asn-445. Residues Asn-541, Asn-568, and Asn-638 are each glycosylated (N-linked (GlcNAc...) asparagine). 2 consecutive TSP type-1 domains span residues 585 to 643 (CEYE…TNEE) and 645 to 702 (CTGT…DDCP). N-linked (GlcNAc...) asparagine glycosylation is found at Asn-715, Asn-729, Asn-741, Asn-814, Asn-820, Asn-857, Asn-933, and Asn-1090. Disulfide bonds link Cys-1089–Cys-1141, Cys-1099–Cys-1124, Cys-1116–Cys-1137, Cys-1150–Cys-1202, Cys-1161–Cys-1185, and Cys-1177–Cys-1198. 2 BPTI/Kunitz inhibitor domains span residues 1089–1141 (CNQT…ETIC) and 1150–1202 (CYLP…SMFC). A disordered region spans residues 1239-1273 (QSAEQPQPQQPQQQQQQQQQQPQQPRQSMEDICRS). Residues 1243–1263 (QPQPQQPQQQQQQQQQQPQQP) show a composition bias toward low complexity. 3 cysteine pairs are disulfide-bonded: Cys-1271–Cys-1321, Cys-1280–Cys-1304, and Cys-1296–Cys-1317. The BPTI/Kunitz inhibitor 3 domain maps to 1271–1321 (CRSRQDAGPCETYSDQWFYNAFSQECETFTYGGCGGNLNRFRSKDECEQRC). The tract at residues 1332 to 1365 (ARQEQAQPAAQPAQPAQPSNIVSPPQQSASPVVV) is disordered. 9 disulfide bridges follow: Cys-1375–Cys-1425, Cys-1384–Cys-1408, Cys-1400–Cys-1421, Cys-1447–Cys-1497, Cys-1456–Cys-1480, Cys-1472–Cys-1493, Cys-1504–Cys-1554, Cys-1513–Cys-1537, and Cys-1529–Cys-1550. BPTI/Kunitz inhibitor domains lie at 1375-1425 (CHLN…ESLC), 1447-1497 (CDEA…KAAC), and 1504-1554 (CQLP…QARC). Residues 1556–1615 (KDDQTTTTSQPEELPSLPLVQEDPQPRPAFSLKQSFAHSRRRDAPFARSVSARHHTPDSE) are disordered. Cystine bridges form between Cys-1621/Cys-1671, Cys-1630/Cys-1654, Cys-1646/Cys-1667, Cys-1731/Cys-1781, Cys-1740/Cys-1764, Cys-1756/Cys-1777, Cys-1790/Cys-1840, Cys-1799/Cys-1823, and Cys-1815/Cys-1836. 3 consecutive BPTI/Kunitz inhibitor domains span residues 1621–1671 (CYAV…ETSC), 1731–1781 (CMLP…ERAC), and 1790–1840 (CELP…ESLC). A glycan (N-linked (GlcNAc...) asparagine) is linked at Asn-1848. 6 disulfide bridges follow: Cys-1853/Cys-1903, Cys-1862/Cys-1886, Cys-1878/Cys-1899, Cys-1914/Cys-1964, Cys-1923/Cys-1947, and Cys-1939/Cys-1960. 2 BPTI/Kunitz inhibitor domains span residues 1853–1903 (CTLE…QQSC) and 1914–1964 (CTLR…FRRC). N-linked (GlcNAc...) asparagine glycans are attached at residues Asn-1992, Asn-2087, and Asn-2133. Residues 2075-2106 (RTTSRPMLTPSKNFSLGTPPTPSPSTVSTTPF) are disordered. The segment covering 2078 to 2090 (SRPMLTPSKNFSL) has biased composition (polar residues). The 40-residue stretch at 2124–2163 (TSNSCMDVGNASTCDLIVKNGLCGKKRYGTFCCHTCTRVH) folds into the PLAC domain.

It belongs to the papilin family. As to expression, localizes to the basement membranes of the gonad primordium, pharynx and intestine (at protein level). Expressed in head and CAN neurons, coelomocytes, body-wall muscles and anal depressor and sphincter and stomatointestinal muscles. Expressed Isoform a: is expressed in body wall muscles and distal cell tips. Isoform b: expressed in embryonic muscles.

It is found in the secreted. Its subcellular location is the extracellular space. The protein resides in the extracellular matrix. It localises to the basement membrane. Its function is as follows. Involved in pharynx morphogenesis probably by remodeling the basement membrane. Functionally, plays a role in embryogenesis, the second phase of distal cell tip migration and is required for distribution of the metalloproteinase, mig-17, during organogenesis. Plays a role in post embryonic distal cell tip migration. Essential extracellular matrix (ECM) protein required for hypodermal enclosure in the embryo. This Caenorhabditis elegans protein is Papilin (mig-6).